Reading from the N-terminus, the 120-residue chain is NAD(P)H-quinone oxidoreductase subunit 3, chloroplastic (120 aa).

The next 3 membrane-spanning stretches (helical) occupy residues 9–29 (IFWA…LISG), 64–84 (MFAL…PWAM), and 88–108 (VLGV…IVGS).

The protein belongs to the complex I subunit 3 family. In terms of assembly, NDH is composed of at least 16 different subunits, 5 of which are encoded in the nucleus.

Its subcellular location is the plastid. It is found in the chloroplast thylakoid membrane. It catalyses the reaction a plastoquinone + NADH + (n+1) H(+)(in) = a plastoquinol + NAD(+) + n H(+)(out). The catalysed reaction is a plastoquinone + NADPH + (n+1) H(+)(in) = a plastoquinol + NADP(+) + n H(+)(out). NDH shuttles electrons from NAD(P)H:plastoquinone, via FMN and iron-sulfur (Fe-S) centers, to quinones in the photosynthetic chain and possibly in a chloroplast respiratory chain. The immediate electron acceptor for the enzyme in this species is believed to be plastoquinone. Couples the redox reaction to proton translocation, and thus conserves the redox energy in a proton gradient. The chain is NAD(P)H-quinone oxidoreductase subunit 3, chloroplastic from Buxus microphylla (Littleleaf boxwood).